Consider the following 137-residue polypeptide: Large ribosomal subunit protein uL16 (137 aa).

Belongs to the universal ribosomal protein uL16 family. As to quaternary structure, part of the 50S ribosomal subunit.

Binds 23S rRNA and is also seen to make contacts with the A and possibly P site tRNAs. This is Large ribosomal subunit protein uL16 from Aromatoleum aromaticum (strain DSM 19018 / LMG 30748 / EbN1) (Azoarcus sp. (strain EbN1)).